Here is a 158-residue protein sequence, read N- to C-terminus: Ribosomal RNA large subunit methyltransferase H (158 aa).

Residues Leu74, Gly105, and 124-129 (LGPLTL) contribute to the S-adenosyl-L-methionine site.

Belongs to the RNA methyltransferase RlmH family. As to quaternary structure, homodimer.

The protein localises to the cytoplasm. It carries out the reaction pseudouridine(1915) in 23S rRNA + S-adenosyl-L-methionine = N(3)-methylpseudouridine(1915) in 23S rRNA + S-adenosyl-L-homocysteine + H(+). Specifically methylates the pseudouridine at position 1915 (m3Psi1915) in 23S rRNA. This chain is Ribosomal RNA large subunit methyltransferase H, found in Xylella fastidiosa (strain 9a5c).